A 154-amino-acid polypeptide reads, in one-letter code: Aspartate carbamoyltransferase regulatory chain (154 aa).

Positions 109, 114, 138, and 141 each coordinate Zn(2+).

This sequence belongs to the PyrI family. Contains catalytic and regulatory chains. Zn(2+) is required as a cofactor.

In terms of biological role, involved in allosteric regulation of aspartate carbamoyltransferase. The polypeptide is Aspartate carbamoyltransferase regulatory chain (Sodalis glossinidius (strain morsitans)).